The primary structure comprises 217 residues: uncharacterized protein (217 aa).

A compositionally biased stretch (polar residues) spans 59–76 (AQSTIQRTSSLPVPSSSN). Disordered stretches follow at residues 59–105 (AQST…ETAN) and 124–217 (KKSL…HISK). Ser68 bears the Phosphoserine mark. Thr92 is modified (phosphothreonine). A compositionally biased stretch (basic and acidic residues) spans 124 to 135 (KKSLERRVREEQ). Residues 136–147 (EEKTDNEDDNDV) show a composition bias toward acidic residues. The span at 148-157 (EISTQESLEN) shows a compositional bias: polar residues. Over residues 173–188 (LEDDIEGQEFSFDDQD) the composition is skewed to acidic residues. Residues 199–217 (WLSSQKQQGSPLTSDHISK) are compositionally biased toward polar residues.

This is an uncharacterized protein from Schizosaccharomyces pombe (strain 972 / ATCC 24843) (Fission yeast).